An 840-amino-acid polypeptide reads, in one-letter code: Probable alpha-glucuronidase A (840 aa).

The first 19 residues, 1–19 (MWSGIPIFALLSSIGIAAA), serve as a signal peptide directing secretion. Asparagine 50, asparagine 149, asparagine 222, asparagine 262, asparagine 279, asparagine 310, asparagine 465, asparagine 527, asparagine 576, asparagine 610, asparagine 682, asparagine 723, and asparagine 732 each carry an N-linked (GlcNAc...) asparagine glycan.

This sequence belongs to the glycosyl hydrolase 67 family.

The protein resides in the secreted. The enzyme catalyses an alpha-D-glucuronoside + H2O = D-glucuronate + an alcohol. In terms of biological role, alpha-glucuronidase involved in the hydrolysis of xylan, a major structural heterogeneous polysaccharide found in plant biomass representing the second most abundant polysaccharide in the biosphere, after cellulose. Releases 4-O-methylglucuronic acid from xylan. In Aspergillus fumigatus (strain CBS 144.89 / FGSC A1163 / CEA10) (Neosartorya fumigata), this protein is Probable alpha-glucuronidase A (aguA).